Reading from the N-terminus, the 260-residue chain is Hydroxyethylthiazole kinase 1 (260 aa).

Residue M39 coordinates substrate. ATP-binding residues include R115 and T160. G187 contributes to the substrate binding site.

Belongs to the Thz kinase family. The cofactor is Mg(2+).

It carries out the reaction 5-(2-hydroxyethyl)-4-methylthiazole + ATP = 4-methyl-5-(2-phosphooxyethyl)-thiazole + ADP + H(+). The protein operates within cofactor biosynthesis; thiamine diphosphate biosynthesis; 4-methyl-5-(2-phosphoethyl)-thiazole from 5-(2-hydroxyethyl)-4-methylthiazole: step 1/1. Its function is as follows. Catalyzes the phosphorylation of the hydroxyl group of 4-methyl-5-beta-hydroxyethylthiazole (THZ). This is Hydroxyethylthiazole kinase 1 from Streptococcus pneumoniae serotype 19F (strain G54).